The chain runs to 95 residues: uncharacterized protein (95 aa).

Functionally, the presence of the two linear plasmids, termed pGKL1 and pGKL2, in strains of Kluyveromyces lactis confers the killer phenotype to the host cell, by promoting the secretion of a toxin able to inhibit the growth of sensitive strains. This is an uncharacterized protein from Kluyveromyces lactis (strain ATCC 8585 / CBS 2359 / DSM 70799 / NBRC 1267 / NRRL Y-1140 / WM37) (Yeast).